The chain runs to 225 residues: MVTHSKFPAAGMSRPLDTSLRLKTFSSKSEYQLVVNAVRKLQESGFYWSAVTGGEANLLLSAEPAGTFLIRDSSDQRHFFTLSVKTQSGTKNLRIQCEGGSFSLQSDPRSTQPVPRFDCVLKLVHHYMPPPGTPSFSLPPTEPSSEVPEQPPAQALPGSTPKRAYYIYSGGEKIPLVLSRPLSSNVATLQHLCRKTVNGHLDSYEKVTQLPGPIREFLDQYDAPL.

A kinase inhibitory region (KIR) region spans residues 22 to 33 (LKTFSSKSEYQL). The interval 34 to 45 (VVNAVRKLQESG) is extended SH2 subdomain (ESS). Positions 46 to 142 (FYWSAVTGGE…TPSFSLPPTE (97 aa)) constitute an SH2 domain. Residues 131 to 160 (PGTPSFSLPPTEPSSEVPEQPPAQALPGST) form a disordered region. The SOCS box domain occupies 177–224 (VLSRPLSSNVATLQHLCRKTVNGHLDSYEKVTQLPGPIREFLDQYDAP).

Interacts with multiple activated proteins of the tyrosine kinase signaling pathway including IGF1 receptor, insulin receptor and JAK2. Binding to JAK2 is mediated through the KIR and SH2 domains to a phosphorylated tyrosine residue within the JAK2 JH1 domain. Binds specific activated tyrosine residues of the leptin, EPO, IL12, GSCF and gp130 receptors. Interaction with CSNK1E stabilizes SOCS3 protein. Component of the probable ECS(SOCS3) E3 ubiquitin-protein ligase complex which contains CUL5, RNF7/RBX2, elongin BC complex and SOCS3. Interacts with CUL5, RNF7, ELOB and ELOC. Interacts with FGFR3. Interacts with INSR. Interacts with BCL10; this interaction may interfere with BCL10-binding with PELI2. Interacts with NOD2 (via CARD domain); the interaction promotes NOD2 degradation. In terms of processing, phosphorylated on tyrosine residues after stimulation by the cytokines, IL-2, EPO or IGF1. Low expression in lung, spleen and thymus. Expressed in Th2 but not TH1 cells.

The protein operates within protein modification; protein ubiquitination. In terms of biological role, SOCS family proteins form part of a classical negative feedback system that regulates cytokine signal transduction. SOCS3 is involved in negative regulation of cytokines that signal through the JAK/STAT pathway. Inhibits cytokine signal transduction by binding to tyrosine kinase receptors including IL6ST/gp130, LIF, erythropoietin, insulin, IL12, GCSF and leptin receptors. Binding to JAK2 inhibits its kinase activity and regulates IL6 signaling. Suppresses fetal liver erythropoiesis. Regulates onset and maintenance of allergic responses mediated by T-helper type 2 cells. Probable substrate recognition component of a SCF-like ECS (Elongin BC-CUL2/5-SOCS-box protein) E3 ubiquitin-protein ligase complex which mediates the ubiquitination and subsequent proteasomal degradation of target proteins. The protein is Suppressor of cytokine signaling 3 of Mus musculus (Mouse).